The sequence spans 231 residues: 7-cyano-7-deazaguanine synthase (231 aa).

ATP is bound at residue 8–18; the sequence is FSGGQDSTTCL. Zn(2+)-binding residues include Cys-188, Cys-197, Cys-200, and Cys-203.

It belongs to the QueC family. Zn(2+) serves as cofactor.

The enzyme catalyses 7-carboxy-7-deazaguanine + NH4(+) + ATP = 7-cyano-7-deazaguanine + ADP + phosphate + H2O + H(+). The protein operates within purine metabolism; 7-cyano-7-deazaguanine biosynthesis. Its function is as follows. Catalyzes the ATP-dependent conversion of 7-carboxy-7-deazaguanine (CDG) to 7-cyano-7-deazaguanine (preQ(0)). The chain is 7-cyano-7-deazaguanine synthase from Salmonella schwarzengrund (strain CVM19633).